Here is a 376-residue protein sequence, read N- to C-terminus: 1-acyl-sn-glycerol-3-phosphate acyltransferase gamma (376 aa).

Residues 1 to 124 are Cytoplasmic-facing; that stretch reads MGLLAFLKTQ…LGSSKVLAKK (124 aa). The HXXXXD motif motif lies at 96–101; that stretch reads HNFEID. Residues 125 to 145 form a helical membrane-spanning segment; that stretch reads ELLYVPLIGWTWYFLEIVFCK. Residues 146-316 are Lumenal-facing; it reads RKWEEDRDTV…TLLNFLSWAT (171 aa). A helical membrane pass occupies residues 317 to 339; it reads ILLSPLFSFVLGVFASGSPLLIL. At 340–376 the chain is on the cytoplasmic side; the sequence is TFLGFVGAASFGVRRLIGVTEIEKGSSYGNQEFKKKE.

This sequence belongs to the 1-acyl-sn-glycerol-3-phosphate acyltransferase family.

The protein localises to the endoplasmic reticulum membrane. It localises to the nucleus envelope. The catalysed reaction is a 1-acyl-sn-glycero-3-phosphate + an acyl-CoA = a 1,2-diacyl-sn-glycero-3-phosphate + CoA. It carries out the reaction pentadecanoyl-CoA + 1-(9Z-octadecenoyl)-sn-glycero-3-phosphate = 1-(9Z)-octadecenoyl-2-pentadecanoyl-sn-glycero-3-phosphate + CoA. The enzyme catalyses heptadecanoyl-CoA + 1-(9Z-octadecenoyl)-sn-glycero-3-phosphate = 1-(9Z)-octadecenoyl-2-heptadecanoyl-sn-glycero-3-phosphate + CoA. It catalyses the reaction 1-(9Z-octadecenoyl)-sn-glycero-3-phosphate + octadecanoyl-CoA = 1-(9Z-octadecenoyl)-2-octadecanoyl-sn-glycero-3-phosphate + CoA. The catalysed reaction is nonadecanoyl-CoA + 1-(9Z-octadecenoyl)-sn-glycero-3-phosphate = 1-(9Z)-octadecenoyl-2-nonadecanoyl-sn-glycero-3-phosphate + CoA. It carries out the reaction 1-(9Z-octadecenoyl)-sn-glycero-3-phosphate + (5Z,8Z,11Z,14Z)-eicosatetraenoyl-CoA = 1-(9Z)-octadecenoyl-2-(5Z,8Z,11Z,14Z)-eicosatetraenoyl-sn-glycero-3-phosphate + CoA. The enzyme catalyses 1-(9Z-octadecenoyl)-sn-glycero-3-phosphate + (9Z)-octadecenoyl-CoA = 1,2-di-(9Z-octadecenoyl)-sn-glycero-3-phosphate + CoA. It catalyses the reaction 1-(9Z-octadecenoyl)-sn-glycero-3-phosphate + (9Z,12Z)-octadecadienoyl-CoA = 1-(9Z)-octadecenoyl-2-(9Z,12Z)-octadecadienoyl-sn-glycero-3-phosphate + CoA. The catalysed reaction is 1-(9Z-octadecenoyl)-sn-glycero-3-phosphocholine + (5Z,8Z,11Z,14Z)-eicosatetraenoyl-CoA = 1-(9Z)-octadecenoyl-2-(5Z,8Z,11Z,14Z)-icosatetraenoyl-sn-glycero-3-phosphocholine + CoA. It carries out the reaction 1-(9Z-octadecenoyl)-sn-glycero-3-phospho-(1D-myo-inositol) + (5Z,8Z,11Z,14Z)-eicosatetraenoyl-CoA = 1-(9Z-octadecenoyl)-2-(5Z,8Z,11Z,14Z-eicosatetraenoyl)-sn-glycero-3-phospho-1D-myo-inositol + CoA. The enzyme catalyses 1-(9Z-octadecenoyl)-sn-glycero-3-phospho-L-serine + (5Z,8Z,11Z,14Z)-eicosatetraenoyl-CoA = 1-(9Z-octadecenoyl)-2-(5Z,8Z,11Z,14Z-eicosatetraenoyl)-sn-glycero-3-phospho-L-serine + CoA. It catalyses the reaction 1-hexadecanoyl-sn-glycero-3-phosphate + (9Z)-octadecenoyl-CoA = 1-hexadecanoyl-2-(9Z-octadecenoyl)-sn-glycero-3-phosphate + CoA. The catalysed reaction is 1-hexadecanoyl-sn-glycero-3-phosphate + (5Z,8Z,11Z,14Z)-eicosatetraenoyl-CoA = 1-hexadecanoyl-2-(5Z,8Z,11Z,14Z-eicosatetraenoyl)-sn-glycero-3-phosphate + CoA. It carries out the reaction 1-heptadecanoyl-sn-glycero-3-phosphate + (5Z,8Z,11Z,14Z)-eicosatetraenoyl-CoA = 1-heptadecanoyl-2-(5Z,8Z,11Z,14Z)-eicosatetraenoyl-sn-glycero-3-phosphate + CoA. The enzyme catalyses 1-octadecanoyl-sn-glycero-3-phosphate + (9Z)-octadecenoyl-CoA = 1-octadecanoyl-2-(9Z-octadecenoyl)-sn-glycero-3-phosphate + CoA. It catalyses the reaction 1-octadecanoyl-sn-glycero-3-phosphate + (5Z,8Z,11Z,14Z)-eicosatetraenoyl-CoA = 1-octadecanoyl-2-(5Z,8Z,11Z,14Z-eicosatetraenoyl)-sn-glycero-3-phosphate + CoA. The catalysed reaction is 1-(9Z-octadecenoyl)-sn-glycero-3-phosphate + hexadecanoyl-CoA = 1-hexadecanoyl-2-(9Z-octadecenoyl)-sn-glycero-3-phosphate + CoA. It carries out the reaction 1-O-(9Z-octadecenyl)-sn-glycero-3-phosphate + (5Z,8Z,11Z,14Z)-eicosatetraenoyl-CoA = 1-O-(9Z-octadecenyl)-2-(5Z,8Z,11Z,14Z-eicosatetraenoyl)-sn-glycero-3-phosphate + CoA. The enzyme catalyses a 1-acyl-sn-glycero-3-phospho-(1D-myo-inositol) + (5Z,8Z,11Z,14Z)-eicosatetraenoyl-CoA = a 1-acyl-2-(5Z,8Z,11Z,14Z-eicosatetraenoyl)-sn-glycero-3-phospho-(1D-myo-inositol) + CoA. The protein operates within phospholipid metabolism; CDP-diacylglycerol biosynthesis; CDP-diacylglycerol from sn-glycerol 3-phosphate: step 2/3. Its function is as follows. Converts 1-acyl-sn-glycerol-3-phosphate (lysophosphatidic acid or LPA) into 1,2-diacyl-sn-glycerol-3-phosphate (phosphatidic acid or PA) by incorporating an acyl moiety at the sn-2 position of the glycerol backbone. Acts on LPA containing saturated or unsaturated fatty acids C16:0-C20:4 at the sn-1 position using C18:1, C20:4 or C18:2-CoA as the acyl donor. Also acts on lysophosphatidylcholine, lysophosphatidylinositol and lysophosphatidylserine using C18:1 or C20:4-CoA. Has a preference for arachidonoyl-CoA as a donor. Also has a modest lysophosphatidylinositol acyltransferase (LPIAT) activity, converts lysophosphatidylinositol (LPI) into phosphatidylinositol. This Pongo abelii (Sumatran orangutan) protein is 1-acyl-sn-glycerol-3-phosphate acyltransferase gamma (AGPAT3).